The chain runs to 83 residues: Kunitz-type serine protease inhibitor superbin-3 (83 aa).

Positions 1-24 (MSSGGLLLLLGLLTLWEVLTPVSS) are cleaved as a signal peptide. In terms of domain architecture, BPTI/Kunitz inhibitor spans 31–81 (CELPADSGSCKGNFQAFYYNPVQHQCLEFIYGGCDGNANNFKTIDECKRTC). Disulfide bonds link C31–C81, C40–C64, and C56–C77.

Belongs to the venom Kunitz-type family. As to expression, expressed by the venom gland.

The protein localises to the secreted. Its function is as follows. Serine protease inhibitor. This chain is Kunitz-type serine protease inhibitor superbin-3, found in Austrelaps superbus (Lowland copperhead snake).